Here is a 350-residue protein sequence, read N- to C-terminus: Phosphate acyltransferase (350 aa).

Belongs to the PlsX family. Homodimer. Probably interacts with PlsY.

Its subcellular location is the cytoplasm. The enzyme catalyses a fatty acyl-[ACP] + phosphate = an acyl phosphate + holo-[ACP]. The protein operates within lipid metabolism; phospholipid metabolism. Its function is as follows. Catalyzes the reversible formation of acyl-phosphate (acyl-PO(4)) from acyl-[acyl-carrier-protein] (acyl-ACP). This enzyme utilizes acyl-ACP as fatty acyl donor, but not acyl-CoA. The protein is Phosphate acyltransferase of Chelativorans sp. (strain BNC1).